A 622-amino-acid polypeptide reads, in one-letter code: Kinesin-like protein KIFC1 (622 aa).

The disordered stretch occupies residues 1–88 (MKEALEPAKK…KRPGKRPDWD (88 aa)). The span at 32–41 (SSLSQPQGPT) shows a compositional bias: polar residues. Residues 95 to 264 (DLTEELKCYR…QELKGNIRVF (170 aa)) are a coiled coil. The Kinesin motor domain maps to 260 to 612 (NIRVFCRVRP…LRFASKVNQC (353 aa)). Residues 279–323 (PGFLLFPHGPAGPSDPPTRLSLSRSDDRRSTLTRAPAPTTRHDFS) are disordered. The residue at position 309 (threonine 309) is a Phosphothreonine. An ATP-binding site is contributed by 360-367 (GQTGSGKT).

This sequence belongs to the TRAFAC class myosin-kinesin ATPase superfamily. Kinesin family. NCD subfamily. In terms of assembly, binds NUBP1 and NUBP2. Interacts with PPP1R42.

The protein resides in the nucleus. It localises to the cytoplasm. It is found in the cytoskeleton. Its subcellular location is the microtubule organizing center. The protein localises to the centrosome. The protein resides in the spindle. It localises to the early endosome. Its function is as follows. Minus end-directed microtubule-dependent motor required for bipolar spindle formation. May contribute to movement of early endocytic vesicles. Regulates cilium formation and structure. The sequence is that of Kinesin-like protein KIFC1 from Cricetulus griseus (Chinese hamster).